Consider the following 305-residue polypeptide: Glycine--tRNA ligase alpha subunit (305 aa).

This sequence belongs to the class-II aminoacyl-tRNA synthetase family. Tetramer of two alpha and two beta subunits.

The protein localises to the cytoplasm. It catalyses the reaction tRNA(Gly) + glycine + ATP = glycyl-tRNA(Gly) + AMP + diphosphate. The sequence is that of Glycine--tRNA ligase alpha subunit from Streptococcus suis (strain 98HAH33).